A 208-amino-acid chain; its full sequence is Outer-membrane lipoprotein carrier protein (208 aa).

A signal peptide spans 1–21; that stretch reads MPAFRYLIVLPLLCWGFASQA.

Belongs to the LolA family. Monomer.

Its subcellular location is the periplasm. Functionally, participates in the translocation of lipoproteins from the inner membrane to the outer membrane. Only forms a complex with a lipoprotein if the residue after the N-terminal Cys is not an aspartate (The Asp acts as a targeting signal to indicate that the lipoprotein should stay in the inner membrane). The chain is Outer-membrane lipoprotein carrier protein from Methylococcus capsulatus (strain ATCC 33009 / NCIMB 11132 / Bath).